The chain runs to 304 residues: Acetyl-coenzyme A carboxylase carboxyl transferase subunit beta (304 aa).

One can recognise a CoA carboxyltransferase N-terminal domain in the interval 25-294; that stretch reads LWIKCPETGE…KAVKRDTATE (270 aa).

It belongs to the AccD/PCCB family. Acetyl-CoA carboxylase is a heterohexamer composed of biotin carboxyl carrier protein (AccB), biotin carboxylase (AccC) and two subunits each of ACCase subunit alpha (AccA) and ACCase subunit beta (AccD).

The protein localises to the cytoplasm. It catalyses the reaction N(6)-carboxybiotinyl-L-lysyl-[protein] + acetyl-CoA = N(6)-biotinyl-L-lysyl-[protein] + malonyl-CoA. The protein operates within lipid metabolism; malonyl-CoA biosynthesis; malonyl-CoA from acetyl-CoA: step 1/1. Functionally, component of the acetyl coenzyme A carboxylase (ACC) complex. Biotin carboxylase (BC) catalyzes the carboxylation of biotin on its carrier protein (BCCP) and then the CO(2) group is transferred by the transcarboxylase to acetyl-CoA to form malonyl-CoA. This chain is Acetyl-coenzyme A carboxylase carboxyl transferase subunit beta, found in Rhizobium meliloti (strain 1021) (Ensifer meliloti).